The sequence spans 287 residues: Acetylglutamate kinase (287 aa).

Substrate contacts are provided by residues 64-65, arginine 86, and asparagine 185; that span reads GG.

This sequence belongs to the acetylglutamate kinase family. ArgB subfamily.

The protein localises to the cytoplasm. The enzyme catalyses N-acetyl-L-glutamate + ATP = N-acetyl-L-glutamyl 5-phosphate + ADP. The protein operates within amino-acid biosynthesis; L-arginine biosynthesis; N(2)-acetyl-L-ornithine from L-glutamate: step 2/4. Its function is as follows. Catalyzes the ATP-dependent phosphorylation of N-acetyl-L-glutamate. In Hydrogenobaculum sp. (strain Y04AAS1), this protein is Acetylglutamate kinase.